Here is a 345-residue protein sequence, read N- to C-terminus: Uroporphyrinogen decarboxylase (345 aa).

Substrate is bound by residues 26–30, aspartate 76, tyrosine 151, serine 205, and histidine 321; that span reads RQAGR.

It belongs to the uroporphyrinogen decarboxylase family. In terms of assembly, homodimer.

The protein resides in the cytoplasm. It catalyses the reaction uroporphyrinogen III + 4 H(+) = coproporphyrinogen III + 4 CO2. Its pathway is porphyrin-containing compound metabolism; protoporphyrin-IX biosynthesis; coproporphyrinogen-III from 5-aminolevulinate: step 4/4. Its function is as follows. Catalyzes the decarboxylation of four acetate groups of uroporphyrinogen-III to yield coproporphyrinogen-III. The chain is Uroporphyrinogen decarboxylase from Phenylobacterium zucineum (strain HLK1).